We begin with the raw amino-acid sequence, 878 residues long: Alanine--tRNA ligase (878 aa).

His568, His572, Cys669, and His673 together coordinate Zn(2+).

Belongs to the class-II aminoacyl-tRNA synthetase family. The cofactor is Zn(2+).

The protein resides in the cytoplasm. It carries out the reaction tRNA(Ala) + L-alanine + ATP = L-alanyl-tRNA(Ala) + AMP + diphosphate. Catalyzes the attachment of alanine to tRNA(Ala) in a two-step reaction: alanine is first activated by ATP to form Ala-AMP and then transferred to the acceptor end of tRNA(Ala). Also edits incorrectly charged Ser-tRNA(Ala) and Gly-tRNA(Ala) via its editing domain. The sequence is that of Alanine--tRNA ligase from Polaromonas sp. (strain JS666 / ATCC BAA-500).